We begin with the raw amino-acid sequence, 304 residues long: Coenzyme PQQ synthesis protein B (304 aa).

The protein belongs to the PqqB family.

Its pathway is cofactor biosynthesis; pyrroloquinoline quinone biosynthesis. Its function is as follows. May be involved in the transport of PQQ or its precursor to the periplasm. In Pseudomonas aeruginosa (strain UCBPP-PA14), this protein is Coenzyme PQQ synthesis protein B.